The sequence spans 409 residues: Argininosuccinate synthase (409 aa).

ATP is bound by residues 8 to 16 (AYSGGLDTS) and alanine 34. Residue tyrosine 85 participates in L-citrulline binding. Residue glycine 115 participates in ATP binding. The L-aspartate site is built by threonine 117, asparagine 121, and aspartate 122. Asparagine 121 contacts L-citrulline. Residues arginine 125, serine 178, serine 187, glutamate 268, and tyrosine 280 each contribute to the L-citrulline site.

Belongs to the argininosuccinate synthase family. Type 1 subfamily. As to quaternary structure, homotetramer.

Its subcellular location is the cytoplasm. It catalyses the reaction L-citrulline + L-aspartate + ATP = 2-(N(omega)-L-arginino)succinate + AMP + diphosphate + H(+). Its pathway is amino-acid biosynthesis; L-arginine biosynthesis; L-arginine from L-ornithine and carbamoyl phosphate: step 2/3. The protein is Argininosuccinate synthase of Thermotoga maritima (strain ATCC 43589 / DSM 3109 / JCM 10099 / NBRC 100826 / MSB8).